We begin with the raw amino-acid sequence, 274 residues long: Phosphate import ATP-binding protein PstB (274 aa).

Over residues 1-11 the composition is skewed to polar residues; that stretch reads MSEISIATSVP. Residues 1 to 21 form a disordered region; sequence MSEISIATSVPSGPGPLIGNQ. The ABC transporter domain maps to 28-269; sequence VIVRDLNFYY…PNDRRTQDYI (242 aa). 60 to 67 provides a ligand contact to ATP; it reads GPSGCGKS.

This sequence belongs to the ABC transporter superfamily. Phosphate importer (TC 3.A.1.7) family. As to quaternary structure, the complex is composed of two ATP-binding proteins (PstB), two transmembrane proteins (PstC and PstA) and a solute-binding protein (PstS).

It localises to the cell inner membrane. The enzyme catalyses phosphate(out) + ATP + H2O = ADP + 2 phosphate(in) + H(+). Its function is as follows. Part of the ABC transporter complex PstSACB involved in phosphate import. Responsible for energy coupling to the transport system. The polypeptide is Phosphate import ATP-binding protein PstB (Rhodopseudomonas palustris (strain BisB5)).